Reading from the N-terminus, the 548-residue chain is CTP synthase (548 aa).

The segment at M1–L266 is amidoligase domain. S14 is a binding site for CTP. S14 lines the UTP pocket. Residues S15–I20 and D72 contribute to the ATP site. 2 residues coordinate Mg(2+): D72 and E140. CTP contacts are provided by residues D147–E149, K187–Q192, and K223. UTP is bound by residues K187–Q192 and K223. The region spanning T291 to R543 is the Glutamine amidotransferase type-1 domain. G353 contacts L-glutamine. C380 serves as the catalytic Nucleophile; for glutamine hydrolysis. Residues L381–Q384, E404, and R471 each bind L-glutamine. Residues H516 and E518 contribute to the active site.

It belongs to the CTP synthase family. Homotetramer.

The catalysed reaction is UTP + L-glutamine + ATP + H2O = CTP + L-glutamate + ADP + phosphate + 2 H(+). It carries out the reaction L-glutamine + H2O = L-glutamate + NH4(+). It catalyses the reaction UTP + NH4(+) + ATP = CTP + ADP + phosphate + 2 H(+). The protein operates within pyrimidine metabolism; CTP biosynthesis via de novo pathway; CTP from UDP: step 2/2. With respect to regulation, allosterically activated by GTP, when glutamine is the substrate; GTP has no effect on the reaction when ammonia is the substrate. The allosteric effector GTP functions by stabilizing the protein conformation that binds the tetrahedral intermediate(s) formed during glutamine hydrolysis. Inhibited by the product CTP, via allosteric rather than competitive inhibition. Catalyzes the ATP-dependent amination of UTP to CTP with either L-glutamine or ammonia as the source of nitrogen. Regulates intracellular CTP levels through interactions with the four ribonucleotide triphosphates. The protein is CTP synthase of Blochmanniella pennsylvanica (strain BPEN).